We begin with the raw amino-acid sequence, 372 residues long: MESGIDLQGQFISALQSLGLSHDLAKLLWLPLPMLMMLIVATVGVLVAVWLERKISAAVQQRIGPEYIGPLGILAPLADGLKLIFKEDVLPANSDRWLFTLGPAVVVIPVFLSYIIVPFGQNLLISNLAMGVFLWIALSSIAPIGLLMAGYASNNKYSLLGGLRAAAQSISYEIPLALAVLAVAMMSNGLGTVEIVEQQSQYGILSWNVWRQPIGFLVFWIAALAECERLPFDLPEAEEELVAGYQTEYAGMKFALFYLGAYVNLVLSALLVSVLYFGGWSFPIPLETIANLLGVSETNPFLQIAFAVLGITMTLIKAYFFVFLAILLRWTVPRVRIDQLLDLGWKFLLPVGLVNLLLTAGLKLAFPVAFGG.

Transmembrane regions (helical) follow at residues 27–47 (LLWL…GVLV), 65–85 (PEYI…KLIF), 97–117 (WLFT…YIIV), 128–148 (LAMG…GLLM), 176–196 (LALA…VEIV), 204–224 (ILSW…IAAL), 254–274 (FALF…LVSV), 308–328 (VLGI…AILL), and 347–367 (FLLP…LAFP).

This sequence belongs to the complex I subunit 1 family. In terms of assembly, NDH-1 is composed of at least 11 different subunits.

It localises to the cellular thylakoid membrane. The catalysed reaction is a plastoquinone + NADH + (n+1) H(+)(in) = a plastoquinol + NAD(+) + n H(+)(out). It catalyses the reaction a plastoquinone + NADPH + (n+1) H(+)(in) = a plastoquinol + NADP(+) + n H(+)(out). Its function is as follows. NDH-1 shuttles electrons from an unknown electron donor, via FMN and iron-sulfur (Fe-S) centers, to quinones in the respiratory and/or the photosynthetic chain. The immediate electron acceptor for the enzyme in this species is believed to be plastoquinone. Couples the redox reaction to proton translocation, and thus conserves the redox energy in a proton gradient. This Thermosynechococcus vestitus (strain NIES-2133 / IAM M-273 / BP-1) protein is NAD(P)H-quinone oxidoreductase subunit 1.